The following is a 628-amino-acid chain: F-box only protein 21 (628 aa).

The F-box domain occupies 28-84; sequence SCLVNLPGEVLEYILCCGSLTAADIGRVSSTCRRLRELCQSSGKVWKEQFRVRWPSL.

Directly interacts with SKP1 and CUL1.

In terms of biological role, substrate-recognition component of the SCF (SKP1-CUL1-F-box protein)-type E3 ubiquitin ligase complex. In Homo sapiens (Human), this protein is F-box only protein 21 (FBXO21).